Reading from the N-terminus, the 475-residue chain is Solute carrier family 46 member 2 (475 aa).

At 1-23 the chain is on the cytoplasmic side; it reads MSPEVTCPRRGHLPRFHPRTWVE. The chain crosses the membrane as a helical span at residues 24–44; that stretch reads PVVASSQVAASLYDAGLLLVV. The Extracellular segment spans residues 45–78; it reads KASYGTGGSSNHSASPSPRGALEDQQQRAISNFY. An N-linked (GlcNAc...) asparagine glycan is attached at asparagine 55. The chain crosses the membrane as a helical span at residues 79–99; sequence IIYNLVVGLSPLLSAYGLGWL. Topologically, residues 100 to 108 are cytoplasmic; the sequence is SDRYHRKIS. The chain crosses the membrane as a helical span at residues 109 to 129; it reads ICMSLLGFLLSRLGLLLKVLL. The Extracellular portion of the chain corresponds to 130–138; that stretch reads DWPVEVLYG. A helical transmembrane segment spans residues 139-159; it reads AAALNGLFGGFSAFWSGVMAL. Over 160–172 the chain is Cytoplasmic; it reads GSLGSSEGRRSVR. Residues 173-193 traverse the membrane as a helical segment; sequence LILIDLMLGLAGFCGSMASGH. Residues 194–205 lie on the Extracellular side of the membrane; it reads LFKQMAGHSGQG. The chain crosses the membrane as a helical span at residues 206–226; that stretch reads LILTACSVSCASFALLYSLLV. Residues 227–282 are Cytoplasmic-facing; the sequence is LKVPESVAKPSQELPAVDTVSGTVGTYRTLDPDQLDQQYAVGHPPSPGKAKPHKTT. The chain crosses the membrane as a helical span at residues 283 to 303; that stretch reads IALLFVGAIIYDLAVVGTVDV. Residues 304 to 320 are Extracellular-facing; the sequence is IPLFVLREPLGWNQVQV. Residues 321-341 traverse the membrane as a helical segment; sequence GYGMAAGYTIFITSFLGVLVF. The Cytoplasmic segment spans residues 342-347; the sequence is SRCFRD. The helical transmembrane segment at 348 to 368 threads the bilayer; sequence TTMIMIGMVSFGSGALLLAFV. At 369-370 the chain is on the extracellular side; the sequence is KE. Residues 371 to 391 form a helical membrane-spanning segment; the sequence is TYMFYIARAVMLFALIPVTTI. Topologically, residues 392 to 406 are cytoplasmic; the sequence is RSAMSKLIKGSSYGK. The helical transmembrane segment at 407–427 threads the bilayer; that stretch reads VFVILQLSLALTGVVTSTLYN. Residues 428 to 435 are Extracellular-facing; sequence KIYQLTMD. Residues 436 to 456 form a helical membrane-spanning segment; it reads MFVGSCFALSSFLSFLAIIPI. Topologically, residues 457 to 475 are cytoplasmic; that stretch reads SIVAYKQVPLSPYGDIIEK.

This sequence belongs to the major facilitator superfamily. SLC46A family. In terms of processing, glycosylated. Strongly expressed in the adult thymus. Expressed in spleen, lymph nodes, thymus, PBL, bone marrow and fetal liver. Expressed in monocytes and pre-dendridic cells.

The protein localises to the endosome membrane. The protein resides in the cell membrane. It carries out the reaction N-acetyl-beta-D-glucosaminyl-(1-&gt;4)-1,6-anhydro-N-acetyl-beta-D-muramoyl-L-alanyl-gamma-D-glutamyl-meso-2,6-diaminopimeloyl-D-alanine(out) + n H(+)(out) = N-acetyl-beta-D-glucosaminyl-(1-&gt;4)-1,6-anhydro-N-acetyl-beta-D-muramoyl-L-alanyl-gamma-D-glutamyl-meso-2,6-diaminopimeloyl-D-alanine(in) + n H(+)(in). The enzyme catalyses L-alanyl-gamma-D-glutamyl-meso-2,6-diaminopimelate(out) + n H(+)(out) = L-alanyl-gamma-D-glutamyl-meso-2,6-diaminopimelate(in) + n H(+)(in). The catalysed reaction is N-acetyl-D-muramoyl-L-alanyl-D-isoglutamine(out) + n H(+)(out) = N-acetyl-D-muramoyl-L-alanyl-D-isoglutamine(in) + n H(+)(in). It catalyses the reaction 2',3'-cGAMP(out) + n H(+)(out) = 2',3'-cGAMP(in) + n H(+)(in). It carries out the reaction 3',3'-cGAMP(out) + n H(+)(out) = 3',3'-cGAMP(in) + n H(+)(in). In terms of biological role, proton-coupled transporter that delivers pathogen-associated or danger-associated molecular patterns to cytosolic pattern recognition receptors as part of the innate immune response to microbes or tissue injury. Has selectivity toward muropeptides that contain the amino acid diaminopimelic acid (DAP-type peptidoglycan muropeptides) including Tri-DAP and tracheal toxin (TCT), common in Gram-negative bacteria and Gram-positive bacilli. In the context of immune recognition of skin microbiota, shuttles bacterial muropeptides across the endolysosomal membranes into the cytosol for recognition by NOD1, triggering MYD88-dependent secretion of IL1A and neutrophil recruitment in a pyroptosis-type inflammatory process. To a lesser extent and redundantly, transports muramyl dipeptides derived from most bacterial proteoglycans, eliciting NOD2 receptor activation and downstream inflammatory responses. Postulated to function as a dominant importer of cyclic GMP-AMP dinucleotides (cGAMPs) in monocyte and macrophage cell lineages. Selectively imports cGAMPs derived from pathogenic bacteria such as 3'3'-cGAMP thus providing for differential immune recognition of pathogenic versus commensal bacteria. During tumorigenesis may transport extracellular tumor-derived 2'3'-cGAMP across the plasma membrane of M1-polarized macrophages to activate the anti-tumoral stimulator of interferon genes (STING) pathway. The transport mechanism, its electrogenicity and stoichiometry remain to be elucidated. The chain is Solute carrier family 46 member 2 from Homo sapiens (Human).